The chain runs to 275 residues: Tumor necrosis factor receptor superfamily member 14 (275 aa).

The signal sequence occupies residues 1–38 (MEPLPGWGSAPWSQAPTDNTFRLVPCVFLLNLLQRISA). TNFR-Cys repeat units lie at residues 41–75 (SCRQ…GTVC), 77–119 (PCPP…DTVC), and 120–162 (RCIP…DTVC). 8 disulfides stabilise this stretch: C42-C53, C54-C67, C57-C75, C78-C93, C96-C111, C99-C119, C121-C138, and C144-C162. Residues N184 and N197 are each glycosylated (N-linked (GlcNAc...) asparagine). The helical transmembrane segment at 211–231 (VVSILLPLVIVGAGIAGFLIC) threads the bilayer.

The protein belongs to the tumor necrosis factor receptor superfamily. Interacts with TRAF2, TRAF3 and TRAF5. Interacts (via CRD1/TNFR-Cys 1) with CD160; this interaction is direct. Interacts (via CRD1/TNFR-Cys 1) with BTLA; this interaction is direct. Post-translationally, N-glycosylated. In terms of tissue distribution, expressed at mucosal sites including colon and pulmonary epithelial cells. Expressed in naive T cells.

Its subcellular location is the cell membrane. Functionally, receptor for four distinct ligands: The TNF superfamily members TNFSF14/LIGHT and homotrimeric LTA/lymphotoxin-alpha and the immunoglobulin superfamily members BTLA and CD160, altogether defining a complex stimulatory and inhibitory signaling network. Signals via the TRAF2-TRAF3 E3 ligase pathway to promote immune cell survival and differentiation. Participates in bidirectional cell-cell contact signaling between antigen presenting cells and lymphocytes. In response to ligation of TNFSF14/LIGHT, delivers costimulatory signals to T cells, promoting cell proliferation and effector functions. Interacts with CD160 on NK cells, enhancing IFNG production and anti-tumor immune response. In the context of bacterial infection, acts as a signaling receptor on epithelial cells for CD160 from intraepithelial lymphocytes, triggering the production of antimicrobial proteins and pro-inflammatory cytokines. Upon binding to CD160 on activated CD4+ T cells, down-regulates CD28 costimulatory signaling, restricting memory and alloantigen-specific immune response. May interact in cis (on the same cell) or in trans (on other cells) with BTLA. In cis interactions, appears to play an immune regulatory role inhibiting in trans interactions in naive T cells to maintain a resting state. In trans interactions, can predominate during adaptive immune response to provide survival signals to effector T cells. The sequence is that of Tumor necrosis factor receptor superfamily member 14 from Mus musculus (Mouse).